A 127-amino-acid chain; its full sequence is Glycine cleavage system H protein (127 aa).

In terms of domain architecture, Lipoyl-binding spans 22–104 (EVVIGITHFA…YEGAWMVKVE (83 aa)). N6-lipoyllysine is present on lysine 63.

This sequence belongs to the GcvH family. As to quaternary structure, the glycine cleavage system is composed of four proteins: P, T, L and H. (R)-lipoate is required as a cofactor.

Functionally, the glycine cleavage system catalyzes the degradation of glycine. The H protein shuttles the methylamine group of glycine from the P protein to the T protein. Its function is as follows. Is also involved in protein lipoylation via its role as an octanoyl/lipoyl carrier protein intermediate. In Bacillus cereus (strain ATCC 10987 / NRS 248), this protein is Glycine cleavage system H protein.